A 270-amino-acid polypeptide reads, in one-letter code: MDEKYDAALDLLRRLNPNNLTENLQRIIGLEPELAEDLLSSIDVPLKVQQDSKQSGRPFLCCDYNRDVDSYRSPWSNEYFPELSAEDLQESPFPSESLRSLEVLANDSFDVYRDLYYEGGISSVYLWDLDEEGEFAGVVLFKKEGSNKESWDSIHVIEATKGNDDETFTYRLTSTIILALDNKQNDTSLAGNLTRQTEKEAKIDTSNTDISHITNLGTLIEDIESQLRTQLEIVYFEKTRDIFHQTRSQKSTTDSQEQQQKEVIKGLQNL.

The span at 245-258 (QTRSQKSTTDSQEQ) shows a compositional bias: polar residues. Positions 245–270 (QTRSQKSTTDSQEQQQKEVIKGLQNL) are disordered.

This sequence belongs to the F-actin-capping protein beta subunit family. Component of the F-actin capping complex, composed of a heterodimer of an alpha and a beta subunit.

It is found in the cytoplasm. The protein resides in the cytoskeleton. The protein localises to the actin patch. F-actin-capping proteins bind in a Ca(2+)-independent manner to the fast growing ends of actin filaments (barbed end) thereby blocking the exchange of subunits at these ends. Unlike other capping proteins (such as gelsolin and severin), these proteins do not sever actin filaments. This chain is F-actin-capping protein subunit beta (CAP2), found in Candida glabrata (strain ATCC 2001 / BCRC 20586 / JCM 3761 / NBRC 0622 / NRRL Y-65 / CBS 138) (Yeast).